The chain runs to 466 residues: Alpha-1A adrenergic receptor (466 aa).

Topologically, residues 1–27 (MVLLSENASEGSNCTHPPAPVNISKAI) are extracellular. Residues Asn7, Asn13, and Asn22 are each glycosylated (N-linked (GlcNAc...) asparagine). Residues 28–51 (LLGVILGGLIIFGVLGNILVILSV) form a helical membrane-spanning segment. Over 52 to 64 (ACHRHLHSVTHYY) the chain is Cytoplasmic. Residues 65–88 (IVNLAVADLLLTSTVLPFSAIFEI) traverse the membrane as a helical segment. The Extracellular segment spans residues 89-99 (LGYWAFGRVFC). Cys99 and Cys176 are oxidised to a cystine. Residues 100–122 (NIWAAVDVLCCTASIMGLCIISI) form a helical membrane-spanning segment. Over 123–143 (DRYIGVSYPLRYPTIVTQRRG) the chain is Cytoplasmic. The helical transmembrane segment at 144–167 (VRALLCVWVLSLVISIGPLFGWRQ) threads the bilayer. The Extracellular segment spans residues 168 to 181 (PAPEDETICQINEE). The chain crosses the membrane as a helical span at residues 182–205 (PGYVLFSALGSFYVPLAIILVMYC). Residues 206–273 (RVYVVAKRES…FSREKKAAKT (68 aa)) are Cytoplasmic-facing. The residue at position 215 (Ser215) is a Phosphoserine; by PKA. The helical transmembrane segment at 274-297 (LGIVVGCFVLCWLPFFLVMPIGSF) threads the bilayer. The Extracellular segment spans residues 298–305 (FPDFKPSE). A helical membrane pass occupies residues 306 to 329 (TVFKIVFWLGYLNSCINPIIYPCS). At 330 to 466 (SQEFKKAFQN…ISLGENGEEV (137 aa)) the chain is on the cytoplasmic side. The short motif at 334–349 (KKAFQNVLRIQCLRRR) is the Nuclear localization signal element. Cys345 is lipidated: S-palmitoyl cysteine.

The protein belongs to the G-protein coupled receptor 1 family. Adrenergic receptor subfamily. ADRA1A sub-subfamily. As to quaternary structure, homo- and heterooligomer. Heterooligomerizes with ADRA1B homooligomers in cardiac myocytes. Interacts with CAVIN4. C-terminal Ser or Thr residues may be phosphorylated. As to expression, abundant in heart, brain, aorta, vena cava, vas deferens, submaxillary gland, lung, and kidney. Found at lower levels in prostate, parotid gland and skeletal muscle.

It localises to the nucleus membrane. Its subcellular location is the cell membrane. It is found in the cytoplasm. The protein resides in the membrane. The protein localises to the caveola. Functionally, this alpha-adrenergic receptor mediates its action by association with G proteins that activate a phosphatidylinositol-calcium second messenger system. Its effect is mediated by G(q) and G(11) proteins. Nuclear ADRA1A-ADRA1B heterooligomers regulate phenylephrine (PE)-stimulated ERK signaling in cardiac myocytes. This is Alpha-1A adrenergic receptor (Adra1a) from Rattus norvegicus (Rat).